We begin with the raw amino-acid sequence, 476 residues long: Calcium uptake protein 1, mitochondrial (476 aa).

A mitochondrion-targeting transit peptide spans 1–33; the sequence is MFRLNSLSALAELAVGSRWYHGGSQPIQIRRRL. The segment at 68–106 is disordered; the sequence is SDIGDKGKNKDEGDVCNHEKKTADLAPHPEEKKKKRSGF. The tract at residues 99-110 is polybasic region; sequence KKKKRSGFRDRK. S122 is modified (phosphoserine). Positions 126–129 are k/R-ring; it reads KIFR. An EF-hand 1 domain is found at 218–253; sequence TPQRNFEIAFKMFDLNGDGEVDMEEFEQVQSIIRSQ. The Ca(2+) site is built by D231, N233, D235, E237, and E242. A k/R-ring region spans residues 259-263; sequence RHRDR. The region spanning 408 to 443 is the EF-hand 2 domain; sequence LSDHVCDVVFALFDCDGNGELSNKEFVSIMKQRLMR. Residues D421, D423, N425, E427, and E432 each contribute to the Ca(2+) site. Position 455 is an asymmetric dimethylarginine (R455). The interval 455 to 465 is C-helix region; that stretch reads RLMQAMWKCAQ.

Belongs to the MICU1 family. MICU1 subfamily. Heterodimer; disulfide-linked; heterodimerizes with MICU2 or MICU3. Homodimer; disulfide-linked. Component of the uniplex complex, composed of MCU, EMRE/SMDT1, MICU1 and MICU2 (or MICU3) in a 4:4:1:1 stoichiometry. The composition of calcium sensors within the uniplex complex can differ depending on tissues: a MICU1 homodimer can be present instead of the MICU1-MICU2 heterodimer in skeletal-muscle and kidney. MICU1 is recruited to the uniplex complex by EMRE/SMDT1, and it associates with MCU at low calcium levels, occluding the pore of the MCU channel. Associates with the MICOS complex. Interacts with SLC25A23. Interacts with CHCHD4/MIA40; which introduces the interchain disulfide bond with MICU2. Interacts (when methylated) with UCP2; leading to decrease the calcium sensitivity of MICU1. Post-translationally, phosphorylation at Ser-122 by AKT1 impairs its maturation and stability. In terms of processing, asymmetric dimethylation at Arg-455 by PRMT1 decreases the calcium sensitivity of MICU1 by promoting interaction with UCP2. Degraded by YME1L1 when not complexed as homodimer or heterodimer. Not degraded when complexed as homodimer or heterodimer; the presence of the interchain disulfide bond protecting MICU1 from degradation by YME1L1. In terms of tissue distribution, expressed in epithelial cell lines. Strongly expressed in epidermal keratinocytes and dermal endothelial cells.

The protein localises to the mitochondrion intermembrane space. It localises to the mitochondrion inner membrane. Activated by spermine, kaempferol and SB202190, which bind MICU1 and prevent MCU pore occlusion in absence of calcium. Functionally, calcium sensor of the mitochondrial calcium uniporter (MCU) channel, which senses calcium level via its EF-hand domains. MICU1 and MICU2 (or MICU3) form a disulfide-linked heterodimer that stimulates and inhibits MCU activity, depending on the concentration of calcium. At low calcium levels, MICU1 occludes the pore of the MCU channel, preventing mitochondrial calcium uptake. At higher calcium levels, calcium-binding to MICU1 and MICU2 (or MICU3) induces a conformational change that weakens MCU-MICU1 interactions and moves the MICU1-MICU2 heterodimer away from the pore, allowing calcium permeation through the MCU channel. Also required to protect against manganese toxicity by preventing manganese uptake by MCU: mechanistically, manganese-binding to its EF-hand domains does not induce any conformational change, maintaining MCU pore occlusion. Also acts as a barrier for inhibitors of the MCU channel, such as ruthenium red or its derivative Ru360. Acts as a regulator of mitochondrial cristae structure independently of its ability to regulate the mitochondrial calcium uniporter channel. Regulates glucose-dependent insulin secretion in pancreatic beta-cells by regulating mitochondrial calcium uptake. Induces T-helper 1-mediated autoreactivity, which is accompanied by the release of IFNG. Its function is as follows. Isoform that regulates mitochondrial calcium uniporter (MCU) in the skeletal muscle. Compared to other isoforms, this isoform has higher affinity for calcium, promoting mitochondrial calcium uptake at lower calcium concentrations. This allows a rapid response of mitochondrial metabolism and ensures sustained ATP production needed for resistance and strenuous exercise. The sequence is that of Calcium uptake protein 1, mitochondrial from Homo sapiens (Human).